The following is a 93-amino-acid chain: Small ribosomal subunit protein bS6 (93 aa).

The protein belongs to the bacterial ribosomal protein bS6 family.

In terms of biological role, binds together with bS18 to 16S ribosomal RNA. In Treponema denticola (strain ATCC 35405 / DSM 14222 / CIP 103919 / JCM 8153 / KCTC 15104), this protein is Small ribosomal subunit protein bS6.